Reading from the N-terminus, the 268-residue chain is Chymotrypsin-C (268 aa).

The first 16 residues, 1-16 (MLGITVLAAILACASS), serve as a signal peptide directing secretion. A propeptide spans 17–29 (CGDPTFPPNLSAR) (activation peptide). Intrachain disulfides connect Cys-17–Cys-141, Cys-59–Cys-75, Cys-155–Cys-222, Cys-186–Cys-202, and Cys-212–Cys-243. Residue Asn-25 is glycosylated (N-linked (GlcNAc...) asparagine). Residues 30–267 (VVGGEDAVPN…YIDWIKEKIQ (238 aa)) enclose the Peptidase S1 domain. His-74 functions as the Charge relay system in the catalytic mechanism. 2 N-linked (GlcNAc...) asparagine glycosylation sites follow: Asn-79 and Asn-90. Asp-121 serves as the catalytic Charge relay system. A glycan (N-linked (GlcNAc...) asparagine) is linked at Asn-182. The active-site Charge relay system is Ser-216.

This sequence belongs to the peptidase S1 family. Elastase subfamily.

It catalyses the reaction Preferential cleavage: Leu-|-Xaa, Tyr-|-Xaa, Phe-|-Xaa, Met-|-Xaa, Trp-|-Xaa, Gln-|-Xaa, Asn-|-Xaa.. In terms of biological role, regulates activation and degradation of trypsinogens and procarboxypeptidases by targeting specific cleavage sites within their zymogen precursors. Has chymotrypsin-type protease activity and hypocalcemic activity. Cleaves TRY4 and TRY5 and thereby inhibits their autoactivation. This Mus musculus (Mouse) protein is Chymotrypsin-C (Ctrc).